The chain runs to 445 residues: MAISFDYSNALPFMQENELDYLSEFVKAAHHMLHERKGPGSDFLGWVDWPIRYDKNEFSRIKQAAERIRNHSDALVVIGIGGSYLGARAAIEALSHTFHNQMNDTTQIYFAGQNISSTYISHLLDVLEGKDLSINVISKSGTTTEPAIAFRIFRDYMEKKYGKEEARKRIYVTTDRTKGALKKLADQEGYETFVIPDNIGGRYSVLTAVGLLPIAVAGLNIDRMMEGAASAYHKYNNPDLLTNESYQYAAVRNILYRKGKAIELLVNYEPSLHYVSEWWKQLFGESEGKDQKGLFPASVDFTTDLHSMGQYVQEGRRNLIETVLHVKKPQIELTIQEDPENIDGLNFLAGKTLDEVNKKAFQGTLLAHVDGGVPNLIVELDEMNEYTFGEMVYFFEKACGISGHLLGVNPFDQPGVEAYKKNMFALLGKPGFEDEKAALMKRLSK.

The active-site Proton donor is glutamate 285. Catalysis depends on residues histidine 306 and lysine 420.

It belongs to the GPI family. Homodimer.

It localises to the cytoplasm. It catalyses the reaction alpha-D-glucose 6-phosphate = beta-D-fructose 6-phosphate. It participates in carbohydrate biosynthesis; gluconeogenesis. The protein operates within carbohydrate degradation; glycolysis; D-glyceraldehyde 3-phosphate and glycerone phosphate from D-glucose: step 2/4. Functionally, catalyzes the reversible isomerization of glucose-6-phosphate to fructose-6-phosphate. This chain is Glucose-6-phosphate isomerase 2, found in Geobacillus stearothermophilus (Bacillus stearothermophilus).